A 204-amino-acid chain; its full sequence is Glideosome-associated protein 45 (204 aa).

Positions 1–86 (MGNKCSRSKV…KEEIDYATQE (86 aa)) are disordered. Gly-2 is lipidated: N-myristoyl glycine. Positions 2–29 (GNKCSRSKVKEPKRKDIDELAERENLKK) are targets GAP45 to the cell membrane; however, dispensable for the formation of the glideosome complex and the association with the inner membrane complex. A compositionally biased stretch (basic and acidic residues) spans 9 to 53 (KVKEPKRKDIDELAERENLKKQSEEIIEEKPEEVVEQVEETHEEP). The span at 54–73 (LEQEQELDEQKIEEEEEEPE) shows a compositional bias: acidic residues. Residue Ser-89 is modified to Phosphoserine; by CPK10. At Ser-103 the chain carries Phosphoserine; by CPK10 and PKB. Ser-149 carries the phosphoserine; by CPK10 modification.

Component of the glideosome complex composed of GAP50, GAP45, MTIP and MyoA; the complex is formed during the late schizont stage and in merozoites. MyoA, MTIP and GAP45 probably form an initial complex in the cytoplasm which is then recruited to the outer face of the inner membrane complex via the interaction with GAP50. Interacts with GAP50; the interaction is independent of GAP45 phosphorylation status and can also occur independently of the formation of the glideosome complex. In terms of processing, phosphorylated at multiple sites. Phosphorylation increases during the schizont stage and peaks in segmented merozoites. May be phosphorylated by PKB. In schizonts, phosphorylated at Ser-89 and Ser-149 in response to phospholipase C-mediated calcium release. Phosphorylation at Ser-149 begins in early schizonts while phosphorylation at Ser-103 begins in late schizonts. Phosphorylation at Ser-89, Ser-103 and Ser-149 appears to be dispensable for GAP45 inner membrane complex localization or GAP45 inclusion in the glideosome complex. Phosphorylation is not required for interaction with GAP50; however, it may regulate the interaction with MTIP and MyoA. N-myristoylated by NMT. N-myristoylation may contribute to the targeting of GAP45 to the inner membrane complex with the subsequent palmitoylation strengthening the interaction with the membrane. Post-translationally, palmitoylated. Palmitoylation appears to follow N-myristoylation and may strengthen the interaction with the inner membrane complex.

It localises to the inner membrane complex. In terms of biological role, component of the glideosome complex, an inner membrane complex structure involved in parasite gliding motility and host cell invasion. During the asexual blood stage, required in schizonts to recruit MTIP and MyoA to the inner membrane complex where they assemble with GAP50 to form the glideosome complex. By regulating the formation of the glideosome, plays an essential role during merozoite invasion of host erythrocytes. In Plasmodium falciparum (isolate 3D7), this protein is Glideosome-associated protein 45.